The sequence spans 350 residues: Phenylalanine--tRNA ligase alpha subunit (350 aa).

Glutamate 257 provides a ligand contact to Mg(2+).

Belongs to the class-II aminoacyl-tRNA synthetase family. Phe-tRNA synthetase alpha subunit type 1 subfamily. Tetramer of two alpha and two beta subunits. Mg(2+) is required as a cofactor.

The protein localises to the cytoplasm. The enzyme catalyses tRNA(Phe) + L-phenylalanine + ATP = L-phenylalanyl-tRNA(Phe) + AMP + diphosphate + H(+). This chain is Phenylalanine--tRNA ligase alpha subunit, found in Listeria monocytogenes serotype 4a (strain HCC23).